Consider the following 602-residue polypeptide: Aspartate--tRNA(Asp/Asn) ligase (602 aa).

Position 187 (Glu-187) interacts with L-aspartate. Residues 211–214 (QQFK) form an aspartate region. L-aspartate is bound by residues Arg-233 and His-461. Residue 233–235 (RDE) participates in ATP binding. Glu-495 serves as a coordination point for ATP. An L-aspartate-binding site is contributed by Arg-502. An ATP-binding site is contributed by 547-550 (GLDR).

The protein belongs to the class-II aminoacyl-tRNA synthetase family. Type 1 subfamily. As to quaternary structure, homodimer.

Its subcellular location is the cytoplasm. The enzyme catalyses tRNA(Asx) + L-aspartate + ATP = L-aspartyl-tRNA(Asx) + AMP + diphosphate. In terms of biological role, aspartyl-tRNA synthetase with relaxed tRNA specificity since it is able to aspartylate not only its cognate tRNA(Asp) but also tRNA(Asn). Reaction proceeds in two steps: L-aspartate is first activated by ATP to form Asp-AMP and then transferred to the acceptor end of tRNA(Asp/Asn). This is Aspartate--tRNA(Asp/Asn) ligase from Chlorobium phaeovibrioides (strain DSM 265 / 1930) (Prosthecochloris vibrioformis (strain DSM 265)).